The primary structure comprises 897 residues: Interleukin enhancer-binding factor 3-A (897 aa).

The region spanning 5 to 379 is the DZF domain; the sequence is RIFLNDDRHV…PLKRPIEEDG (375 aa). Disordered stretches follow at residues 52-85, 364-403, and 466-502; these read QEKD…GENP, TTYA…PPQV, and MGLP…EVDS. 2 stretches are compositionally biased toward basic and acidic residues: residues 72-81 and 373-384; these read EEGKDSEMKT and RPIEEDGDDKSP. Residues 372–390 carry the Bipartite nuclear localization signal motif; sequence KRPIEEDGDDKSPSKKKKK. 2 consecutive DRBM domains span residues 399 to 468 and 521 to 587; these read EPPQ…DMGL and HGKN…KLFP. Disordered stretches follow at residues 627-650 and 708-797; these read PPPQ…GRGG and GDSY…AQGA. Residues 637 to 650 are compositionally biased toward gly residues; the sequence is RGGMNRGRGRGRGG. Residues 714 to 747 show a composition bias toward pro residues; the sequence is PTPPKPFVNKKPPPPQQQQQQQPPPQHASNPPKP. The span at 749 to 794 shows a compositional bias: low complexity; that stretch reads YNQGYQGHQGGQQQQQQQQQQQTYNQNQYSNYGPPQKQKGGYNQGA.

As to quaternary structure, a component of a ybx2/frgy2-containing mRNA-ribonucleoprotein (mRNP) complex. Also a component of the CCAAT box transcription factor (CBTF) complex. In terms of processing, phosphorylated. Phosphorylation affects nuclear translocation. Methylated by protein arginine N-methyltransferase 1 (prmt1b) in the RGG-rich domain. Methylation decreases DNA-binding and thereby decreases transcription of the gata2 gene, but does not regulate dsRNA binding or subcellular localization. Expressed mainly in the ectoderm (at protein level).

Its subcellular location is the nucleus. It is found in the cytoplasm. Its function is as follows. RNA-binding protein that plays an essential role in the biogenesis of circular RNAs (circRNAs) which are produced by back-splicing circularization of pre-mRNAs. Within the nucleus, promotes circRNAs processing by stabilizing the regulatory elements residing in the flanking introns of the circularized exons. Plays thereby a role in the back-splicing of a subset of circRNAs. As a consequence, participates in a wide range of transcriptional and post-transcriptional processes. Binds to poly-U elements and AU-rich elements (AREs) in the 3'-UTR of target mRNAs. Upon viral infection, ILF3 accumulates in the cytoplasm and participates in the innate antiviral response. Mechanistically, ILF3 becomes phosphorylated and activated by the double-stranded RNA-activated protein kinase/PKR which releases ILF3 from cellular mature circRNAs. In turn, unbound ILF3 molecules are able to interact with and thus inhibit viral mRNAs. Has a cytoplasmic role early in development as part of a ribonucleoprotein (mRNP) complex which may regulate mRNA transport and/or translation. Following nuclear localization at the mid-blastula transition, acts as a transcription factor and binds the 5'-CCAAT-3' promoter sequence to regulate transcription of the gata2 gene as a subunit of the CCAAT box transcription factor (CBTF). Its role as an mRNP component negatively regulates its activity as a transcription factor by precluding its nuclear localization. The protein is Interleukin enhancer-binding factor 3-A (ilf3-a) of Xenopus laevis (African clawed frog).